The primary structure comprises 182 residues: UPF0316 protein BCG9842_B1857 (182 aa).

3 consecutive transmembrane segments (helical) span residues 6-26 (LIFV…ILLV), 32-52 (SAAG…GIVF), and 58-78 (WMNI…GGYI).

It belongs to the UPF0316 family.

Its subcellular location is the cell membrane. This is UPF0316 protein BCG9842_B1857 from Bacillus cereus (strain G9842).